Reading from the N-terminus, the 156-residue chain is Small ribosomal subunit protein uS7 (156 aa).

It belongs to the universal ribosomal protein uS7 family. Part of the 30S ribosomal subunit. Contacts proteins S9 and S11.

Functionally, one of the primary rRNA binding proteins, it binds directly to 16S rRNA where it nucleates assembly of the head domain of the 30S subunit. Is located at the subunit interface close to the decoding center, probably blocks exit of the E-site tRNA. The chain is Small ribosomal subunit protein uS7 from Rhodopseudomonas palustris (strain BisB18).